A 405-amino-acid chain; its full sequence is 4-hydroxy-3-methylbut-2-en-1-yl diphosphate synthase (flavodoxin) (405 aa).

Residues Cys-297, Cys-300, Cys-343, and Glu-350 each contribute to the [4Fe-4S] cluster site.

It belongs to the IspG family. [4Fe-4S] cluster is required as a cofactor.

It catalyses the reaction (2E)-4-hydroxy-3-methylbut-2-enyl diphosphate + oxidized [flavodoxin] + H2O + 2 H(+) = 2-C-methyl-D-erythritol 2,4-cyclic diphosphate + reduced [flavodoxin]. The protein operates within isoprenoid biosynthesis; isopentenyl diphosphate biosynthesis via DXP pathway; isopentenyl diphosphate from 1-deoxy-D-xylulose 5-phosphate: step 5/6. Its function is as follows. Converts 2C-methyl-D-erythritol 2,4-cyclodiphosphate (ME-2,4cPP) into 1-hydroxy-2-methyl-2-(E)-butenyl 4-diphosphate. The sequence is that of 4-hydroxy-3-methylbut-2-en-1-yl diphosphate synthase (flavodoxin) from Francisella tularensis subsp. novicida (strain U112).